We begin with the raw amino-acid sequence, 379 residues long: Putative FBD-associated F-box protein At5g38570 (379 aa).

Residues 1–47 (MDNINGLPDDLLVKILSFVPTYVAVSTCVLSKRWEFLWMWLPNLEFV) enclose the F-box domain. The FBD domain occupies 295-345 (CWNQPSSVLECLLSSLKILNWSAYFGRPQDRDIAVYILKNACHLKTATFLT).

This chain is Putative FBD-associated F-box protein At5g38570, found in Arabidopsis thaliana (Mouse-ear cress).